We begin with the raw amino-acid sequence, 435 residues long: Mitochondrial distribution and morphology protein 12 (435 aa).

The region spanning 1 to 435 (MSIEVDWGAA…VYPSFWTFLV (435 aa)) is the SMP-LTD domain. Disordered stretches follow at residues 73–113 (DEDD…AINH) and 186–268 (WNDS…TSEE). Basic and acidic residues predominate over residues 96–113 (THPELNESSFRDDNAINH). Residues 218–238 (SSNPTSRPSTSSTLPSHPSGS) show a composition bias toward low complexity. The segment covering 251–268 (HGSHPEEHGHLDDPTSEE) has biased composition (basic and acidic residues).

It belongs to the MDM12 family. In terms of assembly, component of the ER-mitochondria encounter structure (ERMES) or MDM complex, composed of mmm1, mdm10, mdm12 and mdm34. A mmm1 homodimer associates with one molecule of mdm12 on each side in a pairwise head-to-tail manner, and the SMP-LTD domains of mmm1 and mdm12 generate a continuous hydrophobic tunnel for phospholipid trafficking.

It localises to the mitochondrion outer membrane. The protein localises to the endoplasmic reticulum membrane. In terms of biological role, component of the ERMES/MDM complex, which serves as a molecular tether to connect the endoplasmic reticulum (ER) and mitochondria. Components of this complex are involved in the control of mitochondrial shape and protein biogenesis, and function in nonvesicular lipid trafficking between the ER and mitochondria. Mdm12 is required for the interaction of the ER-resident membrane protein mmm1 and the outer mitochondrial membrane-resident beta-barrel protein mdm10. The mdm12-mmm1 subcomplex functions in the major beta-barrel assembly pathway that is responsible for biogenesis of all mitochondrial outer membrane beta-barrel proteins, and acts in a late step after the SAM complex. The mdm10-mdm12-mmm1 subcomplex further acts in the TOM40-specific pathway after the action of the mdm12-mmm1 complex. Essential for establishing and maintaining the structure of mitochondria and maintenance of mtDNA nucleoids. The sequence is that of Mitochondrial distribution and morphology protein 12 from Aspergillus niger (strain ATCC MYA-4892 / CBS 513.88 / FGSC A1513).